Here is a 262-residue protein sequence, read N- to C-terminus: Indole-3-glycerol phosphate synthase (262 aa).

It belongs to the TrpC family.

The catalysed reaction is 1-(2-carboxyphenylamino)-1-deoxy-D-ribulose 5-phosphate + H(+) = (1S,2R)-1-C-(indol-3-yl)glycerol 3-phosphate + CO2 + H2O. It functions in the pathway amino-acid biosynthesis; L-tryptophan biosynthesis; L-tryptophan from chorismate: step 4/5. The protein is Indole-3-glycerol phosphate synthase of Bordetella petrii (strain ATCC BAA-461 / DSM 12804 / CCUG 43448).